Here is a 124-residue protein sequence, read N- to C-terminus: Urocortin (124 aa).

The signal sequence occupies residues 1 to 25 (MRQAGRAALLAALLLLVQLCPGSSQ). Residues 23 to 46 (SSQRSPEAAGVQDPSLRWSPGARN) form a disordered region. The propeptide occupies 26 to 82 (RSPEAAGVQDPSLRWSPGARNQGGGARALLLLLAERFPRRAGPGRLGLGTAGERPRR). Valine 122 is modified (valine amide).

This sequence belongs to the sauvagine/corticotropin-releasing factor/urotensin I family. As to quaternary structure, interacts with CRHR1 and CRHR2 (via their N-terminal extracellular domain). Keratinocytes in epidermis and the outer and inner root sheaths of hair follicles, epithelium of sebaceous and sweat glands, erector pili muscle, cutaneous blood vessel walls, cutaneous nerves and dermal mononuclear cells. Detected in plasma cells in the lamia propria in colon mucosa (at protein level). Expressed in pituitary and adrenal glands. Detected in plasma cells in the lamia propria in colon mucosa.

It localises to the secreted. Functionally, acts in vitro to stimulate the secretion of adrenocorticotropic hormone (ACTH). Binds with high affinity to CRF receptor types 1, 2-alpha, and 2-beta. Plays a role in the establishment of normal hearing thresholds. Reduces food intake and regulates ghrelin levels in gastric body and plasma. This is Urocortin (UCN) from Homo sapiens (Human).